Reading from the N-terminus, the 370-residue chain is Histidinol-phosphate aminotransferase 2 (370 aa).

K230 carries the post-translational modification N6-(pyridoxal phosphate)lysine.

The protein belongs to the class-II pyridoxal-phosphate-dependent aminotransferase family. Histidinol-phosphate aminotransferase subfamily. As to quaternary structure, homodimer. It depends on pyridoxal 5'-phosphate as a cofactor.

It catalyses the reaction L-histidinol phosphate + 2-oxoglutarate = 3-(imidazol-4-yl)-2-oxopropyl phosphate + L-glutamate. It functions in the pathway amino-acid biosynthesis; L-histidine biosynthesis; L-histidine from 5-phospho-alpha-D-ribose 1-diphosphate: step 7/9. The chain is Histidinol-phosphate aminotransferase 2 from Pseudomonas fluorescens (strain ATCC BAA-477 / NRRL B-23932 / Pf-5).